The primary structure comprises 145 residues: Putative pre-16S rRNA nuclease (145 aa).

This sequence belongs to the YqgF nuclease family.

It localises to the cytoplasm. Its function is as follows. Could be a nuclease involved in processing of the 5'-end of pre-16S rRNA. This is Putative pre-16S rRNA nuclease from Pseudomonas fluorescens (strain SBW25).